The chain runs to 261 residues: Cytochrome c oxidase subunit 3 (261 aa).

Residues 1 to 15 (MTHQLHAYHMVKPSP) are Mitochondrial matrix-facing. A helical transmembrane segment spans residues 16-34 (WPLTGALSAFLLTSGLIMW). The Mitochondrial intermembrane segment spans residues 35–40 (FHFYST). The chain crosses the membrane as a helical span at residues 41–66 (ALLTLGLLTNVLTMYQWWRDIIREST). Topologically, residues 67–72 (YQGHHT) are mitochondrial matrix. A helical membrane pass occupies residues 73–105 (TPVQKSLRYGMTLFIISEVFFFAGFFWAFYHSS). Residues 106–128 (LAPTPRLGCHWPPTGITPLNPLE) lie on the Mitochondrial intermembrane side of the membrane. The chain crosses the membrane as a helical span at residues 129–152 (VPLLNTSVLLASGVTITWAHHSLM). Over 153–155 (NGN) the chain is Mitochondrial matrix. A helical membrane pass occupies residues 156–183 (RKQTIQALLITILLGTYFTLVQISEYFE). Topologically, residues 184-190 (APFTISD) are mitochondrial intermembrane. The helical transmembrane segment at 191 to 223 (GIYGSTFFVATGFHGLHVIIGSTFLLICLIRQL) threads the bilayer. Residues 224 to 232 (FYHFTPSHH) are Mitochondrial matrix-facing. The helical transmembrane segment at 233–256 (FGFEAAAWYWHFVDVIWLFLYISI) threads the bilayer. Over 257 to 261 (YWWGS) the chain is Mitochondrial intermembrane.

The protein belongs to the cytochrome c oxidase subunit 3 family. In terms of assembly, component of the cytochrome c oxidase (complex IV, CIV), a multisubunit enzyme composed of 14 subunits. The complex is composed of a catalytic core of 3 subunits MT-CO1, MT-CO2 and MT-CO3, encoded in the mitochondrial DNA, and 11 supernumerary subunits COX4I, COX5A, COX5B, COX6A, COX6B, COX6C, COX7A, COX7B, COX7C, COX8 and NDUFA4, which are encoded in the nuclear genome. The complex exists as a monomer or a dimer and forms supercomplexes (SCs) in the inner mitochondrial membrane with NADH-ubiquinone oxidoreductase (complex I, CI) and ubiquinol-cytochrome c oxidoreductase (cytochrome b-c1 complex, complex III, CIII), resulting in different assemblies (supercomplex SCI(1)III(2)IV(1) and megacomplex MCI(2)III(2)IV(2)).

Its subcellular location is the mitochondrion inner membrane. It catalyses the reaction 4 Fe(II)-[cytochrome c] + O2 + 8 H(+)(in) = 4 Fe(III)-[cytochrome c] + 2 H2O + 4 H(+)(out). Functionally, component of the cytochrome c oxidase, the last enzyme in the mitochondrial electron transport chain which drives oxidative phosphorylation. The respiratory chain contains 3 multisubunit complexes succinate dehydrogenase (complex II, CII), ubiquinol-cytochrome c oxidoreductase (cytochrome b-c1 complex, complex III, CIII) and cytochrome c oxidase (complex IV, CIV), that cooperate to transfer electrons derived from NADH and succinate to molecular oxygen, creating an electrochemical gradient over the inner membrane that drives transmembrane transport and the ATP synthase. Cytochrome c oxidase is the component of the respiratory chain that catalyzes the reduction of oxygen to water. Electrons originating from reduced cytochrome c in the intermembrane space (IMS) are transferred via the dinuclear copper A center (CU(A)) of subunit 2 and heme A of subunit 1 to the active site in subunit 1, a binuclear center (BNC) formed by heme A3 and copper B (CU(B)). The BNC reduces molecular oxygen to 2 water molecules using 4 electrons from cytochrome c in the IMS and 4 protons from the mitochondrial matrix. The chain is Cytochrome c oxidase subunit 3 (MT-CO3) from Papio hamadryas (Hamadryas baboon).